Here is a 165-residue protein sequence, read N- to C-terminus: Cyclic pyranopterin monophosphate synthase (165 aa).

Substrate-binding positions include 75 to 77 (MCH) and 115 to 116 (ME). Asp130 is an active-site residue.

The protein belongs to the MoaC family. In terms of assembly, homohexamer; trimer of dimers.

It catalyses the reaction (8S)-3',8-cyclo-7,8-dihydroguanosine 5'-triphosphate = cyclic pyranopterin phosphate + diphosphate. It functions in the pathway cofactor biosynthesis; molybdopterin biosynthesis. Catalyzes the conversion of (8S)-3',8-cyclo-7,8-dihydroguanosine 5'-triphosphate to cyclic pyranopterin monophosphate (cPMP). This Halalkalibacterium halodurans (strain ATCC BAA-125 / DSM 18197 / FERM 7344 / JCM 9153 / C-125) (Bacillus halodurans) protein is Cyclic pyranopterin monophosphate synthase.